We begin with the raw amino-acid sequence, 465 residues long: tRNA-2-methylthio-N(6)-dimethylallyladenosine synthase (465 aa).

In terms of domain architecture, MTTase N-terminal spans 18–136; it reads RKLYIETYGC…LPNLVGAAEQ (119 aa). Residues C27, C63, C100, C174, C178, and C181 each contribute to the [4Fe-4S] cluster site. The region spanning 160 to 392 is the Radical SAM core domain; it reads GGVHINGFVS…IALQNRLSEE (233 aa). In terms of domain architecture, TRAM spans 395-458; sequence KRDISKTFEV…SATLFGEVVE (64 aa).

Belongs to the methylthiotransferase family. MiaB subfamily. As to quaternary structure, monomer. It depends on [4Fe-4S] cluster as a cofactor.

It is found in the cytoplasm. It carries out the reaction N(6)-dimethylallyladenosine(37) in tRNA + (sulfur carrier)-SH + AH2 + 2 S-adenosyl-L-methionine = 2-methylsulfanyl-N(6)-dimethylallyladenosine(37) in tRNA + (sulfur carrier)-H + 5'-deoxyadenosine + L-methionine + A + S-adenosyl-L-homocysteine + 2 H(+). Its function is as follows. Catalyzes the methylthiolation of N6-(dimethylallyl)adenosine (i(6)A), leading to the formation of 2-methylthio-N6-(dimethylallyl)adenosine (ms(2)i(6)A) at position 37 in tRNAs that read codons beginning with uridine. The polypeptide is tRNA-2-methylthio-N(6)-dimethylallyladenosine synthase (Porphyromonas gingivalis (strain ATCC 33277 / DSM 20709 / CIP 103683 / JCM 12257 / NCTC 11834 / 2561)).